The primary structure comprises 175 residues: Ferritin light chain (175 aa).

The region spanning 7-156 (QNYSPEVEAA…DHLTNIRRLS (150 aa)) is the Ferritin-like diiron domain. Residues glutamate 54, glutamate 57, glutamate 58, glutamate 61, and glutamate 64 each contribute to the Fe cation site.

It belongs to the ferritin family. As to quaternary structure, oligomer of 24 subunits. There are two types of subunits: L (light) chain and H (heavy) chain. The major chain can be light or heavy, depending on the species and tissue type. The functional molecule forms a roughly spherical shell with a diameter of 12 nm and contains a central cavity into which the insoluble mineral iron core is deposited. Interacts with NCOA4.

The protein localises to the cytoplasmic vesicle. Its subcellular location is the autophagosome. The protein resides in the cytoplasm. It is found in the autolysosome. Its function is as follows. Stores iron in a soluble, non-toxic, readily available form. Important for iron homeostasis. Iron is taken up in the ferrous form and deposited as ferric hydroxides after oxidation. Also plays a role in delivery of iron to cells. Mediates iron uptake in capsule cells of the developing kidney. Delivery to lysosomes by the cargo receptor NCOA4 for autophagic degradation and release or iron. This Oryctolagus cuniculus (Rabbit) protein is Ferritin light chain (FTL).